Consider the following 335-residue polypeptide: MQVLVNKIWYEGHPLRWLLLPFSVLFALITAIRRSLFRLGLKSQTPLPVPVIVVGNITVGGSGKTPTVIYLIELLRQQGFNPGVISRGYGADMQGVKVVTAADSAASVGDEPAMIVARTGVPMVVGAKRVDTAKALLAQFAVDVIICDDGLQHYALGRDIELVVIDGKRGLGNRHLLPAGPLREGAWRLNQVDFVVVNGGPAQANQYEMQLSPSAVLPVNPKAVAVFDPTQPVVAMAGIGHPARFFETLTQQGFQLALSHGFDDHQAYDKEVLCELAASRPLMMTEKDAVKCRDFAQENWWYLAVDAKLSPQFDQQLLSRVRSVAAAKQGKSHGV.

58-65 (TVGGSGKT) serves as a coordination point for ATP.

This sequence belongs to the LpxK family.

It catalyses the reaction a lipid A disaccharide + ATP = a lipid IVA + ADP + H(+). The protein operates within glycolipid biosynthesis; lipid IV(A) biosynthesis; lipid IV(A) from (3R)-3-hydroxytetradecanoyl-[acyl-carrier-protein] and UDP-N-acetyl-alpha-D-glucosamine: step 6/6. In terms of biological role, transfers the gamma-phosphate of ATP to the 4'-position of a tetraacyldisaccharide 1-phosphate intermediate (termed DS-1-P) to form tetraacyldisaccharide 1,4'-bis-phosphate (lipid IVA). The chain is Tetraacyldisaccharide 4'-kinase from Shewanella sp. (strain MR-4).